A 439-amino-acid chain; its full sequence is Enolase 2 (439 aa).

Substrate-binding residues include H160 and E169. Residue E212 is the Proton donor of the active site. Residues D247, E296, and D323 each coordinate Mg(2+). Substrate-binding residues include E296 and D323. Catalysis depends on K348, which acts as the Proton acceptor. Substrate contacts are provided by residues 375-378 (SHRS) and K399.

It belongs to the enolase family. In terms of assembly, homodimer. The cofactor is Mg(2+).

It localises to the cytoplasm. The catalysed reaction is (2R)-2-phosphoglycerate = phosphoenolpyruvate + H2O. It participates in carbohydrate degradation; glycolysis; pyruvate from D-glyceraldehyde 3-phosphate: step 4/5. The polypeptide is Enolase 2 (ENO2) (Debaryomyces hansenii (strain ATCC 36239 / CBS 767 / BCRC 21394 / JCM 1990 / NBRC 0083 / IGC 2968) (Yeast)).